Here is a 501-residue protein sequence, read N- to C-terminus: Glucan endo-1,3-beta-glucosidase 3 (501 aa).

The N-terminal stretch at 1 to 18 is a signal peptide; it reads MAALLLLFLFLFASSALS. N-linked (GlcNAc...) asparagine glycosylation is found at Asn88 and Asn107. Glu116 functions as the Proton donor in the catalytic mechanism. N-linked (GlcNAc...) asparagine glycosylation is found at Asn171 and Asn253. Glu263 functions as the Nucleophile in the catalytic mechanism. Asn295, Asn353, and Asn357 each carry an N-linked (GlcNAc...) asparagine glycan. A disulfide bridge connects residues Cys361 and Cys424. 4 N-linked (GlcNAc...) asparagine glycosylation sites follow: Asn451, Asn456, Asn457, and Asn466. Ser470 is lipidated: GPI-anchor amidated serine. Residues 471-501 constitute a propeptide, removed in mature form; it reads GCIPKYYHHPHASFGDLTLLSLLLIIALVFL.

It belongs to the glycosyl hydrolase 17 family. Contains two additional disulfide bonds.

It is found in the cell membrane. It carries out the reaction Hydrolysis of (1-&gt;3)-beta-D-glucosidic linkages in (1-&gt;3)-beta-D-glucans.. This is Glucan endo-1,3-beta-glucosidase 3 from Arabidopsis thaliana (Mouse-ear cress).